We begin with the raw amino-acid sequence, 770 residues long: MGFLLSAEQVLQFVTNQWQDPYAVLGPQQIEQGETSFWLVRALVPNAKQVWLVERATGQAYPMQPLHPETLFELCFAPGTPVPDYFLRAQRVWDPEGQHLEEWEDPYRFPLEKVNHIGELDRYLFNEGNHHRIYEKLGAHPISVDGVQGVHFAVWAPNARNVSVIGDFNHWDGRQHQMKRLGESGIWAVFIPGVGPGAVYKYEVKTAWGDIYEKSDPYGFQQEVRPKTGSIVADLHTYTWHDQEWLEKRAATDPLRSPISVYEVHLGSWMHASTEDPPADGHLVPVEQKPNTRFLTYRELADKLIPYVKELGFTHIELLPVAEHPFDGSWGYQVIGYYAVTSRYGSPQDFMYFVDRAHQEGIGVIVDWVPGHFPKDGHGLAFFDGTHLYEYADPRKGEHKGWGTLVFNYGRNEVRNYLIANALFWFDKYHIDGLRVDAVASMLYLDYDRKEWIPNCYGGREHLEAIDFFRQLNTLIFKYYPGVLSIAEESTAWPMVTWPTHVGGLGFNLKWNMGWMHDMLNYFRMDPWFRQFHHNLVTFSLMYAFSENYMLAFSHDEVVHGKSHMLGKMPGDLWHKFASLRALYGYMFTHPGKKTLFMSMEFGQWNEWNVWADLDWELLQYEPHAKLRHYVATLNQLLRSQPALYTQDTKPEGFRWIDCSDHRGIISFIRYGEDPREWLVVVCNFTPVVWPNYRIGVPQRGFYRELLNSDAVEFWGSGVGNLGGKWTDDWPYHNLPYSLELCLPPLSTLVLKWQPPQLAEDSGENKAMLE.

The Nucleophile role is filled by Asp437. Catalysis depends on Glu488, which acts as the Proton donor.

The protein belongs to the glycosyl hydrolase 13 family. GlgB subfamily. In terms of assembly, monomer.

The catalysed reaction is Transfers a segment of a (1-&gt;4)-alpha-D-glucan chain to a primary hydroxy group in a similar glucan chain.. The protein operates within glycan biosynthesis; glycogen biosynthesis. In terms of biological role, catalyzes the formation of the alpha-1,6-glucosidic linkages in glycogen by scission of a 1,4-alpha-linked oligosaccharide from growing alpha-1,4-glucan chains and the subsequent attachment of the oligosaccharide to the alpha-1,6 position. The polypeptide is 1,4-alpha-glucan branching enzyme GlgB (Synechococcus sp. (strain JA-3-3Ab) (Cyanobacteria bacterium Yellowstone A-Prime)).